The sequence spans 559 residues: Poly(U)-binding-splicing factor PUF60 (559 aa).

Positions Met-1–Phe-516 are inhibits homodimerization. Residues Gln-14 and Lys-43 each participate in a glycyl lysine isopeptide (Lys-Gly) (interchain with G-Cter in SUMO2) cross-link. The residue at position 60 (Thr-60) is a Phosphothreonine. The segment at Gln-77 to Ala-559 is inhibits transcriptional repression, interaction with ERCC3 and apoptosis induction. A Glycyl lysine isopeptide (Lys-Gly) (interchain with G-Cter in SUMO2) cross-link involves residue Lys-80. Ser-112 carries the post-translational modification Phosphoserine. RRM domains follow at residues Cys-129–Asn-207 and Asn-226–Thr-304. The residue at position 244 (Ser-244) is a Phosphoserine. Lys-251 carries the N6-acetyllysine modification. At Thr-314 the chain carries Phosphothreonine. A disordered region spans residues Lys-416–Gln-437. Lys-419 is covalently cross-linked (Glycyl lysine isopeptide (Lys-Gly) (interchain with G-Cter in SUMO2)). The segment covering Glu-427–Gln-437 has biased composition (basic and acidic residues). Lys-454 is subject to N6-acetyllysine. Lys-458 participates in a covalent cross-link: Glycyl lysine isopeptide (Lys-Gly) (interchain with G-Cter in SUMO2). The region spanning Thr-462–Gln-549 is the RRM 3; atypical domain.

The protein belongs to the RRM half pint family. Homodimer. Associates with the spliceosome. Found in a complex with RO60 and Y5 RNA. Found in a complex with FUBP1 and far upstream element (FUSE) DNA segment. Interacts directly with ERCC3. Interacts with CDK7 and GTF2H1. Interacts with SRSF11/P54. Does not interact with ERCC3 in xeroderma pigmentosum complementation group B (XPB) cells. Interacts with ARGLU1; interaction may be involved in ARGLU1-mediated modulation of alternative splicing. In terms of tissue distribution, isoform 2 is expressed in colonic epithelium and colorectal epithelium cancer (at protein level). Isoform 6 is expressed in colorectal epithelial cancer but below detection level in colonic epithelium. Expressed in heart, brain, placenta, lung, liver, skeletal muscle, kidney, pancreas, spleen, thymus, prostate, testis, ovary, small intestine, colon and peripheral blood leukocytes.

It localises to the nucleus. DNA- and RNA-binding protein, involved in several nuclear processes such as pre-mRNA splicing, apoptosis and transcription regulation. In association with FUBP1 regulates MYC transcription at the P2 promoter through the core-TFIIH basal transcription factor. Acts as a transcriptional repressor through the core-TFIIH basal transcription factor. Represses FUBP1-induced transcriptional activation but not basal transcription. Decreases ERCC3 helicase activity. Does not repress TFIIH-mediated transcription in xeroderma pigmentosum complementation group B (XPB) cells. Is also involved in pre-mRNA splicing. Promotes splicing of an intron with weak 3'-splice site and pyrimidine tract in a cooperative manner with U2AF2. Involved in apoptosis induction when overexpressed in HeLa cells. Isoform 6 failed to repress MYC transcription and inhibited FIR-induced apoptosis in colorectal cancer. Isoform 6 may contribute to tumor progression by enabling increased MYC expression and greater resistance to apoptosis in tumors than in normal cells. Modulates alternative splicing of several mRNAs. Binds to relaxed DNA of active promoter regions. Binds to the pyrimidine tract and 3'-splice site regions of pre-mRNA; binding is enhanced in presence of U2AF2. Binds to Y5 RNA in association with RO60. Binds to poly(U) RNA. This chain is Poly(U)-binding-splicing factor PUF60, found in Homo sapiens (Human).